The following is an 842-amino-acid chain: Gamma-aminobutyric acid type B receptor subunit 2 (842 aa).

Residues 1-17 form the signal peptide; sequence MSRWLSLLLFAVQAVGG. Residues 18 to 438 lie on the Extracellular side of the membrane; that stretch reads YEAGEELSCK…TERRREHISS (421 aa). N-linked (GlcNAc...) asparagine glycans are attached at residues Asn274, Asn279, Asn327, and Asn366. A helical transmembrane segment spans residues 439-459; the sequence is ILFLAMSLLALIGIFLALIFL. Over 460 to 477 the chain is Cytoplasmic; the sequence is LINFRYRNHRFIKMSSPN. Residues 478–498 traverse the membrane as a helical segment; it reads LNNIIIAGSICTFASVIMLGL. Over 499 to 506 the chain is Extracellular; sequence DTRIVSPD. The chain crosses the membrane as a helical span at residues 507–527; it reads VFVWLCYTKTWTLCIGFTLSF. Over 528–556 the chain is Cytoplasmic; it reads GAMFSKTWRVHSIFTNIRMDRKAIKDSKL. The chain crosses the membrane as a helical span at residues 557–577; it reads FIILGILLFIDICVLVTWAFV. Residues 578–610 lie on the Extracellular side of the membrane; sequence SPFSYTVTELPHIPEDNIVIIPEVEKCNSSHSG. Residue Asn605 is glycosylated (N-linked (GlcNAc...) asparagine). A helical transmembrane segment spans residues 611-631; that stretch reads VFQAVLYAVKGVLMILGCFLA. Residues 632–647 lie on the Cytoplasmic side of the membrane; the sequence is WETRHVNVPALNDSKY. The chain crosses the membrane as a helical span at residues 648-668; it reads IGTSVYCCVVMSVLGLSTSVI. The Extracellular segment spans residues 669-676; it reads LQERVNEM. The chain crosses the membrane as a helical span at residues 677–697; the sequence is FSLASFFVIFSTTLTLCLVFV. The Cytoplasmic portion of the chain corresponds to 698–842; that stretch reads PKVIELARNP…VDPDEPSTKL (145 aa). Residues 725-740 are compositionally biased toward polar residues; sequence AKTSQPMSPQPRSDSS. Disordered regions lie at residues 725–744 and 791–842; these read AKTSQPMSPQPRSDSSGDLI and SPSS…STKL.

The protein belongs to the G-protein coupled receptor 3 family. In terms of assembly, may form a heterodimer with gbb-1. Expressed in cholinergic motor neurons.

It is found in the cell membrane. Component of a heterodimeric G-protein coupled receptor for GABA, formed by gbb-1 and gbb-2. Within the heterodimeric GABA receptor, only gbb-1 seems to bind agonists, while gbb-2 mediates coupling to G proteins. Ligand binding causes a conformation change that triggers signaling via guanine nucleotide-binding proteins (G proteins) and modulates the activity of down-stream effectors, such as adenylate cyclase. Signaling inhibits adenylate cyclase, stimulates phospholipase A2, activates potassium channels, inactivates voltage-dependent calcium-channels and modulates inositol phospholipid hydrolysis. Plays a critical role in the fine-tuning of inhibitory synaptic transmission. Pre-synaptic GABA receptor inhibits neurotransmitter release by down-regulating high-voltage activated calcium channels, whereas postsynaptic GABA receptor decreases neuronal excitability by activating a prominent inwardly rectifying potassium (Kir) conductance that underlies the late inhibitory postsynaptic potentials. Along with gbb-1, may couple to the G(o)-alpha G-protein goa-1 to negatively regulate cholinergic receptor activity in the presence of high levels of acetylcholine in ventral cord motor neurons. As acetylcholine depolarizes body wall muscles, modulation of acetylcholine levels most likely results in the control of locomotory behavior. Regulates locomotory behavior in response to GABA release by GABAergic motor neurons. The protein is Gamma-aminobutyric acid type B receptor subunit 2 of Caenorhabditis elegans.